Reading from the N-terminus, the 252-residue chain is Flap endonuclease Xni (252 aa).

Mg(2+) is bound at residue Asp-103. One can recognise a 5'-3' exonuclease domain in the interval 159–248 (VLPEQLPDYW…LKGNLQQLRL (90 aa)). 5 residues coordinate K(+): Leu-170, Ala-171, Pro-179, Ile-181, and Ile-184. The segment at 183 to 188 (GIGPKT) is interaction with DNA.

Belongs to the Xni family. Requires Mg(2+) as cofactor. K(+) serves as cofactor.

Has flap endonuclease activity. During DNA replication, flap endonucleases cleave the 5'-overhanging flap structure that is generated by displacement synthesis when DNA polymerase encounters the 5'-end of a downstream Okazaki fragment. This chain is Flap endonuclease Xni, found in Photorhabdus laumondii subsp. laumondii (strain DSM 15139 / CIP 105565 / TT01) (Photorhabdus luminescens subsp. laumondii).